Here is a 435-residue protein sequence, read N- to C-terminus: Putative FBD-associated F-box protein At5g56820 (435 aa).

The region spanning 14 to 60 (SDRISYLPDDLLLRILSFIHTSDAISTSLLSKRWKFVWKMMPTLDLD) is the F-box domain. Residues 341-390 (VRKPNSVPECLTFHLETLEWQGYAGRPEDKEIAVYILGNALRLNTATISR) enclose the FBD domain.

The polypeptide is Putative FBD-associated F-box protein At5g56820 (Arabidopsis thaliana (Mouse-ear cress)).